A 757-amino-acid chain; its full sequence is Tyrosine-protein kinase HTK16 (757 aa).

The SH2 1 domain maps to 10 to 102 (WYHGKITREV…GLPCKLVDFC (93 aa)). ANK repeat units lie at residues 115 to 147 (GLDT…NVNA), 151 to 180 (SGLT…DASA), 184 to 214 (NGRT…DFLK), 219 to 248 (NGWV…SMYP), and 252 to 281 (DGDT…NQPK). The SH2 2 domain maps to 287–379 (WLHQNLDRNG…GLPTLLQFPV (93 aa)). Disordered regions lie at residues 381-407 (SAEN…PSRP) and 444-467 (PKLP…QKGD). A compositionally biased stretch (polar residues) spans 455 to 467 (EVPNSVNVGQKGD). Residues 484–740 (ISFGKELGVG…PTFNELHSTF (257 aa)) form the Protein kinase domain. Residues 490–498 (LGVGEFGSV) and K516 contribute to the ATP site. D608 serves as the catalytic Proton acceptor. A Phosphotyrosine modification is found at Y746.

Belongs to the protein kinase superfamily. Tyr protein kinase family. Epithelial cells.

The enzyme catalyses L-tyrosyl-[protein] + ATP = O-phospho-L-tyrosyl-[protein] + ADP + H(+). May be involved in signal transduction. This is Tyrosine-protein kinase HTK16 (HTK16) from Hydra vulgaris (Hydra).